We begin with the raw amino-acid sequence, 116 residues long: Large ribosomal subunit protein bL17 (116 aa).

The protein belongs to the bacterial ribosomal protein bL17 family. Part of the 50S ribosomal subunit. Contacts protein L32.

The protein is Large ribosomal subunit protein bL17 of Parasynechococcus marenigrum (strain WH8102).